Consider the following 161-residue polypeptide: Probable ubiquitin-conjugating enzyme E2 16 (161 aa).

The UBC core domain occupies 15–161 (IATNRLQKEL…TRWWFHDDKV (147 aa)). The active-site Glycyl thioester intermediate is the Cys-99.

It belongs to the ubiquitin-conjugating enzyme family.

The catalysed reaction is S-ubiquitinyl-[E1 ubiquitin-activating enzyme]-L-cysteine + [E2 ubiquitin-conjugating enzyme]-L-cysteine = [E1 ubiquitin-activating enzyme]-L-cysteine + S-ubiquitinyl-[E2 ubiquitin-conjugating enzyme]-L-cysteine.. It participates in protein modification; protein ubiquitination. Functionally, accepts the ubiquitin from the E1 complex and catalyzes its covalent attachment to other proteins. The polypeptide is Probable ubiquitin-conjugating enzyme E2 16 (UBC16) (Arabidopsis thaliana (Mouse-ear cress)).